A 1611-amino-acid polypeptide reads, in one-letter code: Non-structural polyprotein 1AB (1611 aa).

A coiled-coil region spans residues 124–187 (TTSNLIARAM…ELHLLKELGK (64 aa)). Transmembrane regions (helical) follow at residues 195 to 215 (AFSF…LHYT), 329 to 348 (ISYY…ALAT), 353 to 373 (MVMV…PITV), 375 to 395 (IASV…LVFP), 397 to 417 (FLPY…FFSS), 426 to 446 (VSTA…VIVL), and 450 to 470 (SIPM…SVGV). Catalysis depends on charge relay system; for serine protease activity residues His-550, Asp-582, and Ser-647. Tyr-833 bears the O-(5'-phospho-RNA)-tyrosine mark. Residues 1352-1486 (RYYVELDWTR…AVDKRFINSY (135 aa)) enclose the RdRp catalytic domain.

This sequence belongs to the astroviridae polyprotein 1AB family. In terms of assembly, monomer. Post-translationally, cleaved by the viral and host proteases. The protease is probably autocatalytically cleaved.

The protein localises to the host membrane. The enzyme catalyses RNA(n) + a ribonucleoside 5'-triphosphate = RNA(n+1) + diphosphate. In terms of biological role, responsible for the cleavage of the polyprotein into functional products. Its function is as follows. Protein covalently attached to the 5' extremity of the genomic and subgenomic RNAs. It may serve as a primer for the replicase. The protein is Non-structural polyprotein 1AB (ORF1) of Turkey astrovirus 1 (TAstV-1).